We begin with the raw amino-acid sequence, 691 residues long: Calcium-binding and coiled-coil domain-containing protein 1 (691 aa).

Residues 1–30 form a p300 KIX-binding region; sequence MEESPLSRAPSRGGVNFLNVARTYIPNTKV. Positions 1–190 are N-terminal AD (CTNNB1 binding site); sequence MEESPLSRAP…VQELERALAT (190 aa). Serine 4 is subject to Phosphoserine. The segment at 45 to 125 is interaction with GATA1; it reads SDWIGIFKVE…FQFREPRPMD (81 aa). Coiled coils occupy residues 145-205, 232-339, and 417-514; these read KATV…YKGI, ELED…AELE, and QSVE…ADEK. Positions 501–691 are C-terminal AD (CTNNB1 binding site); interaction with CCAR1; that stretch reads RKLEARLEKV…FSTQDPFTFE (191 aa). Residues 513–604 are disordered; it reads EKWNEDATTE…SDSEAEDEKS (92 aa). A UBZ1-type zinc finger spans residues 653 to 679; that stretch reads WKECPICKERFPAESDKDALEDHMDGH. Cysteine 656, cysteine 659, histidine 675, and histidine 679 together coordinate Zn(2+).

Belongs to the CALCOCO family. As to quaternary structure, part of a calphoglin complex consisting of CALCOCO1, PPA1 and PGM. Interacts with the bHLH-PAS domains of GRIP1, AHR and ARNT. Interacts with CTNNB1 via both its N- and C-terminal regions. Interacts with EP300. Interacts with CCAR1 (via N-terminus) and GATA1.

It is found in the cytoplasm. The protein localises to the nucleus. Functionally, functions as a coactivator for aryl hydrocarbon and nuclear receptors (NR). Recruited to promoters through its contact with the N-terminal basic helix-loop-helix-Per-Arnt-Sim (PAS) domain of transcription factors or coactivators, such as NCOA2. During ER-activation acts synergistically in combination with other NCOA2-binding proteins, such as EP300, CREBBP and CARM1. Involved in the transcriptional activation of target genes in the Wnt/CTNNB1 pathway. Functions as a secondary coactivator in LEF1-mediated transcriptional activation via its interaction with CTNNB1. Coactivator function for nuclear receptors and LEF1/CTNNB1 involves differential utilization of two different activation regions. In association with CCAR1 enhances GATA1- and MED1-mediated transcriptional activation from the gamma-globin promoter during erythroid differentiation of K562 erythroleukemia cells. Seems to enhance inorganic pyrophosphatase thus activating phosphogluomutase (PMG). Probably functions as a component of the calphoglin complex, which is involved in linking cellular metabolism (phosphate and glucose metabolism) with other core functions including protein synthesis and degradation, calcium signaling and cell growth. This Pongo abelii (Sumatran orangutan) protein is Calcium-binding and coiled-coil domain-containing protein 1 (CALCOCO1).